Here is a 91-residue protein sequence, read N- to C-terminus: UPF0250 protein HCH_05838 (91 aa).

This sequence belongs to the UPF0250 family.

In Hahella chejuensis (strain KCTC 2396), this protein is UPF0250 protein HCH_05838.